An 856-amino-acid polypeptide reads, in one-letter code: Rod cGMP-specific 3',5'-cyclic phosphodiesterase subunit beta (856 aa).

N-acetylserine is present on Ser-2. GAF domains lie at 71–220 (NMER…TLNL) and 252–429 (DIER…GWSV). The 334-residue stretch at 481–814 (EEDELGKILK…KEWKALADEY (334 aa)) folds into the PDEase domain. His-557 (proton donor) is an active-site residue. The a divalent metal cation site is built by His-561, His-597, Asp-598, and Asp-718. A lipid anchor (S-geranylgeranyl cysteine) is attached at Cys-853. Residues 854–856 (CIL) constitute a propeptide, removed in mature form.

Belongs to the cyclic nucleotide phosphodiesterase family. In terms of assembly, oligomer composed of two catalytic chains (alpha and beta), an inhibitory chain (gamma) and the delta chain. A divalent metal cation serves as cofactor.

Its subcellular location is the membrane. It is found in the cell projection. It localises to the cilium. The protein resides in the photoreceptor outer segment. The catalysed reaction is 3',5'-cyclic GMP + H2O = GMP + H(+). Its function is as follows. Rod-specific cGMP phosphodiesterase that catalyzes the hydrolysis of 3',5'-cyclic GMP. Necessary for the formation of a functional phosphodiesterase holoenzyme. Involved in retinal circadian rhythm photoentrainment via modulation of UVA and orange light-induced phase-shift of the retina clock. May participate in processes of transmission and amplification of the visual signal. In Mus musculus (Mouse), this protein is Rod cGMP-specific 3',5'-cyclic phosphodiesterase subunit beta.